Consider the following 504-residue polypeptide: Histidine ammonia-lyase (504 aa).

The 5-imidazolinone (Ala-Gly) cross-link spans 142-144 (ASG). A 2,3-didehydroalanine (Ser) modification is found at serine 143.

It belongs to the PAL/histidase family. Post-translationally, contains an active site 4-methylidene-imidazol-5-one (MIO), which is formed autocatalytically by cyclization and dehydration of residues Ala-Ser-Gly.

The protein resides in the cytoplasm. It catalyses the reaction L-histidine = trans-urocanate + NH4(+). The protein operates within amino-acid degradation; L-histidine degradation into L-glutamate; N-formimidoyl-L-glutamate from L-histidine: step 1/3. The chain is Histidine ammonia-lyase from Staphylococcus aureus (strain MRSA252).